A 119-amino-acid polypeptide reads, in one-letter code: Large ribosomal subunit protein uL18 (119 aa).

The protein belongs to the universal ribosomal protein uL18 family. Part of the 50S ribosomal subunit; part of the 5S rRNA/L5/L18/L25 subcomplex. Contacts the 5S and 23S rRNAs.

Its function is as follows. This is one of the proteins that bind and probably mediate the attachment of the 5S RNA into the large ribosomal subunit, where it forms part of the central protuberance. In Clostridium botulinum (strain Langeland / NCTC 10281 / Type F), this protein is Large ribosomal subunit protein uL18.